The sequence spans 421 residues: MVRTRIQRLLTGINRRMMKLLIALALIAYVASVWGNFVNMSKSIQENGEQKMEKKIEEVIAPLREKIQNLERSFTQKYPPVKFLSEKDRKRILITGGAGFVGSHLTDKLMMDGHEVTVVDNFFTGRKRNVEHWIGHENFELINHDVVEPLYIEVDQIYHLASPASPPNYMYNPIKTLKTNTIGTLNMLGLAKRVGARLLLASTSEVYGDPEVHPQSEEYWGHVNPIGPRACYDEGKRVAETMCYAYMKQEGVEVRVARIFNTFGPRMHMNDGRVVSNFILQALQGEQLTVYGSGEQTRAFQYVSDLVNGLVALMNSNVSSPVNLGNPQEHSIVQFARLIKQLVGSGGEISFLSEAQDDPQRRKPDIRKAKLLLGWEPVVPLEEGLNKTIHYFRKELEHQANNQYIPKPKPARVKKGRTRHN.

The Cytoplasmic portion of the chain corresponds to 1-19 (MVRTRIQRLLTGINRRMMK). Residues 20–40 (LLIALALIAYVASVWGNFVNM) form a helical membrane-spanning segment. The Lumenal portion of the chain corresponds to 41–421 (SKSIQENGEQ…RVKKGRTRHN (381 aa)). Residues Gly-99, Phe-100, Val-101, Asp-120, Asn-121, Phe-123, Thr-124, Gly-125, Asp-145, and Val-146 each contribute to the NAD(+) site. Leu-150 and Tyr-151 together coordinate UDP-alpha-D-glucuronate. 2 residues coordinate NAD(+): Leu-160 and Ser-162. Lys-178 contributes to the UDP-alpha-D-glucuronate binding site. Thr-179 lines the NAD(+) pocket. The UDP-alpha-D-glucuronate site is built by Asn-186, Gly-189, Lys-192, and Arg-193. 3 residues coordinate NAD(+): Ala-201, Tyr-232, and Lys-236. The Proton acceptor role is filled by Tyr-232. UDP-alpha-D-glucuronate-binding residues include Tyr-246, Gln-249, and Glu-250. NAD(+) contacts are provided by Thr-262, His-268, and Arg-273. Residues Asn-317 and Asn-386 are each glycosylated (N-linked (GlcNAc...) asparagine). Residues 400–421 (ANNQYIPKPKPARVKKGRTRHN) form a disordered region. Positions 409-421 (KPARVKKGRTRHN) are enriched in basic residues.

The protein belongs to the NAD(P)-dependent epimerase/dehydratase family. UDP-glucuronic acid decarboxylase subfamily. As to quaternary structure, homodimer and homotetramer. NAD(+) is required as a cofactor.

It localises to the golgi apparatus. It is found in the golgi stack membrane. The enzyme catalyses UDP-alpha-D-glucuronate + H(+) = UDP-alpha-D-xylose + CO2. Its pathway is nucleotide-sugar biosynthesis; UDP-alpha-D-xylose biosynthesis; UDP-alpha-D-xylose from UDP-alpha-D-glucuronate: step 1/1. Catalyzes the NAD-dependent decarboxylation of UDP-glucuronic acid to UDP-xylose. Necessary for the biosynthesis of the core tetrasaccharide in glycosaminoglycan biosynthesis. This is UDP-glucuronic acid decarboxylase 1 (uxs1) from Xenopus tropicalis (Western clawed frog).